We begin with the raw amino-acid sequence, 360 residues long: Phospho-N-acetylmuramoyl-pentapeptide-transferase (360 aa).

10 helical membrane passes run 21 to 41 (YITV…LWIG), 73 to 93 (TMGG…WANL), 94 to 114 (ANPY…IGFV), 132 to 152 (WKYF…YWLG), 168 to 188 (IMPQ…VGTG), 199 to 219 (GLAI…AWAT), 239 to 259 (VVVF…FNTY), 263 to 283 (VFMG…VAIL), 288 to 308 (FLLV…ILQV), and 338 to 358 (VIIR…VTLK).

This sequence belongs to the glycosyltransferase 4 family. MraY subfamily. The cofactor is Mg(2+).

Its subcellular location is the cell inner membrane. The enzyme catalyses UDP-N-acetyl-alpha-D-muramoyl-L-alanyl-gamma-D-glutamyl-meso-2,6-diaminopimeloyl-D-alanyl-D-alanine + di-trans,octa-cis-undecaprenyl phosphate = di-trans,octa-cis-undecaprenyl diphospho-N-acetyl-alpha-D-muramoyl-L-alanyl-D-glutamyl-meso-2,6-diaminopimeloyl-D-alanyl-D-alanine + UMP. It functions in the pathway cell wall biogenesis; peptidoglycan biosynthesis. Its function is as follows. Catalyzes the initial step of the lipid cycle reactions in the biosynthesis of the cell wall peptidoglycan: transfers peptidoglycan precursor phospho-MurNAc-pentapeptide from UDP-MurNAc-pentapeptide onto the lipid carrier undecaprenyl phosphate, yielding undecaprenyl-pyrophosphoryl-MurNAc-pentapeptide, known as lipid I. This Haemophilus influenzae (strain PittEE) protein is Phospho-N-acetylmuramoyl-pentapeptide-transferase.